Consider the following 172-residue polypeptide: Centrin-2 (172 aa).

Residues 1-14 (MASNFKKTTMASSA) are compositionally biased toward polar residues. Positions 1–31 (MASNFKKTTMASSAQRKRMSPKPELTEDQKQ) are disordered. Ala2 carries the post-translational modification N-acetylalanine. Residues 2–25 (ASNFKKTTMASSAQRKRMSPKPEL) form a required for self-assembly region. Position 20 is a phosphoserine (Ser20). A Glycyl lysine isopeptide (Lys-Gly) (interchain with G-Cter in SUMO2) cross-link involves residue Lys22. Thr26 carries the post-translational modification Phosphothreonine. EF-hand domains follow at residues 28–63 (DQKQ…LGFE), 64–99 (PKKE…KMSE), 101–136 (DTKE…LGEN), and 137–172 (LTDE…TSLY). Residues Asp41, Asp43, Thr45, Thr47, and Glu52 each contribute to the Ca(2+) site. The Ca(2+) site is built by Asp150, Asp152, Asp154, Glu156, and Glu161.

Belongs to the centrin family. As to quaternary structure, monomer. Homooligomer. Interacts with CCP110, SFI1. Component of the XPC complex composed of XPC, RAD23B and CETN2. Component of the nuclear pore complex (NPC)-associated TREX-2 complex (transcription and export complex 2), composed of at least GANP, 2 copies of ENY2, PCID2, SEM1/DSS1, and either centrin CETN2 or centrin CETN3. The TREX-2 complex also associates with ALYREF/ALY and with the nucleoporin NUP153. Interacts with USP49. Forms a microtubule-associated complex with POC5, POC1B and FAM161A. Interacts with CCDC15. As to expression, ubiquitously expressed in all adult tissues tested, with strongest expression in brain, spleen, kidney, small intestine and ovary. Also expressed in the NIH 3T3 fibroblast cell line and peripheral blood lymphocytes.

Its subcellular location is the cytoplasm. It localises to the cytoskeleton. The protein localises to the microtubule organizing center. It is found in the centrosome. The protein resides in the centriole. Its subcellular location is the nucleus. It localises to the nucleus envelope. The protein localises to the nuclear pore complex. In terms of biological role, plays a fundamental role in microtubule organizing center structure and function. Required for centriole duplication and correct spindle formation. Has a role in regulating cytokinesis and genome stability via cooperation with CALM1 and CCP110. Functionally, involved in global genome nucleotide excision repair (GG-NER) by acting as component of the XPC complex. Cooperatively with Rad23b appears to stabilize Xpc. In vitro, stimulates DNA binding of the Xpc:Rad23b dimer. Its function is as follows. The XPC complex is proposed to represent the first factor bound at the sites of DNA damage and together with other core recognition factors, Xpa, RPA and the TFIIH complex, is part of the pre-incision (or initial recognition) complex. The XPC complex recognizes a wide spectrum of damaged DNA characterized by distortions of the DNA helix such as single-stranded loops, mismatched bubbles or single-stranded overhangs. The orientation of XPC complex binding appears to be crucial for inducing a productive NER. XPC complex is proposed to recognize and to interact with unpaired bases on the undamaged DNA strand which is followed by recruitment of the TFIIH complex and subsequent scanning for lesions in the opposite strand in a 5'-to-3' direction by the NER machinery. Cyclobutane pyrimidine dimers (CPDs) which are formed upon UV-induced DNA damage esacpe detection by the XPC complex due to a low degree of structural perurbation. Instead they are detected by the UV-DDB complex which in turn recruits and cooperates with the XPC complex in the respective DNA repair. As a component of the TREX-2 complex, involved in the export of mRNAs to the cytoplasm through the nuclear pores. This Mus musculus (Mouse) protein is Centrin-2 (Cetn2).